A 277-amino-acid polypeptide reads, in one-letter code: Acetyl-coenzyme A carboxylase carboxyl transferase subunit beta (277 aa).

The CoA carboxyltransferase N-terminal domain occupies 25-277 (LVRRCPVCHT…DLLRLHKGES (253 aa)). Positions 29, 32, 47, and 50 each coordinate Zn(2+). The C4-type zinc-finger motif lies at 29 to 50 (CPVCHTTFLTDHWEPTRLCPAC).

Belongs to the AccD/PCCB family. In terms of assembly, acetyl-CoA carboxylase is a heterohexamer composed of biotin carboxyl carrier protein (AccB), biotin carboxylase (AccC) and two subunits each of ACCase subunit alpha (AccA) and ACCase subunit beta (AccD). Zn(2+) is required as a cofactor.

The protein localises to the cytoplasm. It carries out the reaction N(6)-carboxybiotinyl-L-lysyl-[protein] + acetyl-CoA = N(6)-biotinyl-L-lysyl-[protein] + malonyl-CoA. Its pathway is lipid metabolism; malonyl-CoA biosynthesis; malonyl-CoA from acetyl-CoA: step 1/1. In terms of biological role, component of the acetyl coenzyme A carboxylase (ACC) complex. Biotin carboxylase (BC) catalyzes the carboxylation of biotin on its carrier protein (BCCP) and then the CO(2) group is transferred by the transcarboxylase to acetyl-CoA to form malonyl-CoA. The protein is Acetyl-coenzyme A carboxylase carboxyl transferase subunit beta of Levilactobacillus brevis (strain ATCC 367 / BCRC 12310 / CIP 105137 / JCM 1170 / LMG 11437 / NCIMB 947 / NCTC 947) (Lactobacillus brevis).